The following is a 138-amino-acid chain: Large ribosomal subunit protein uL29 (138 aa).

The tract at residues Met-1–Asn-79 is large ribosomal subunit protein uL29. Positions Lys-80 to Lys-138 are unknown. The segment at Gln-103 to Lys-138 is disordered.

Belongs to the universal ribosomal protein uL29 family.

The sequence is that of Large ribosomal subunit protein uL29 from Mycoplasma capricolum subsp. capricolum (strain California kid / ATCC 27343 / NCTC 10154).